We begin with the raw amino-acid sequence, 341 residues long: tRNA N6-adenosine threonylcarbamoyltransferase (341 aa).

Fe cation contacts are provided by histidine 115 and histidine 119. Residues 137 to 141, aspartate 170, glycine 183, aspartate 187, and asparagine 276 contribute to the substrate site; that span reads IVSGG. Aspartate 304 serves as a coordination point for Fe cation.

The protein belongs to the KAE1 / TsaD family. It depends on Fe(2+) as a cofactor.

It is found in the cytoplasm. The catalysed reaction is L-threonylcarbamoyladenylate + adenosine(37) in tRNA = N(6)-L-threonylcarbamoyladenosine(37) in tRNA + AMP + H(+). Functionally, required for the formation of a threonylcarbamoyl group on adenosine at position 37 (t(6)A37) in tRNAs that read codons beginning with adenine. Is involved in the transfer of the threonylcarbamoyl moiety of threonylcarbamoyl-AMP (TC-AMP) to the N6 group of A37, together with TsaE and TsaB. TsaD likely plays a direct catalytic role in this reaction. This chain is tRNA N6-adenosine threonylcarbamoyltransferase, found in Staphylococcus aureus (strain JH1).